A 181-amino-acid polypeptide reads, in one-letter code: MNKSLKEIYYQDVIPGLIEQFNYTNIHQVLKITKITLNRGLGEASKNNKILEASIKEFELISGQHPLINKARKSVAGFKIREGMPVGISVTLRKKLMYTFLEKLIHLSLPRIRDFRGVSVKSFDGRGNYNLGIKEQLIFPEIEYDQVDQVRGLDISITTTAKTQQEGIALLRALGMPFNDN.

It belongs to the universal ribosomal protein uL5 family. In terms of assembly, part of the 50S ribosomal subunit; contacts the 5S rRNA.

It localises to the plastid. It is found in the chloroplast. Functionally, binds 5S rRNA, forms part of the central protuberance of the 50S subunit. This is Large ribosomal subunit protein uL5c (rpl5) from Guillardia theta (Cryptophyte).